A 447-amino-acid polypeptide reads, in one-letter code: GTPase Der (447 aa).

EngA-type G domains lie at 4–165 (QIIT…PEEE) and 180–357 (LQIV…KIWN). GTP is bound by residues 10 to 17 (GRPNVGKS), 57 to 61 (DTPGL), 119 to 122 (NKCE), 186 to 193 (GRPNAGKS), 233 to 237 (DTAGL), and 298 to 301 (NKWD). Positions 358-443 (KKITTSKLNE…PIRFIYVKTK (86 aa)) constitute a KH-like domain.

This sequence belongs to the TRAFAC class TrmE-Era-EngA-EngB-Septin-like GTPase superfamily. EngA (Der) GTPase family. In terms of assembly, associates with the 50S ribosomal subunit.

Its function is as follows. GTPase that plays an essential role in the late steps of ribosome biogenesis. The sequence is that of GTPase Der from Rickettsia africae (strain ESF-5).